The primary structure comprises 238 residues: Probable phosphatase phospho2 (238 aa).

The Nucleophile role is filled by aspartate 8. Positions 8 and 10 each coordinate Mg(2+). The Proton donor role is filled by aspartate 10. The substrate site is built by aspartate 19 and aspartate 99. Aspartate 179 provides a ligand contact to Mg(2+).

This sequence belongs to the HAD-like hydrolase superfamily. PHOSPHO family. Mg(2+) is required as a cofactor.

Its function is as follows. Probable phosphatase. This chain is Probable phosphatase phospho2 (phospho2), found in Xenopus tropicalis (Western clawed frog).